We begin with the raw amino-acid sequence, 239 residues long: Transcriptional regulatory protein DcuR (239 aa).

Residues 3-121 (NVLIIDDDAM…RFEEALTGWR (119 aa)) enclose the Response regulatory domain. Residue Asp56 is modified to 4-aspartylphosphate. The segment at residues 181–200 (TDELANEVNISRVSCRKYLI) is a DNA-binding region (H-T-H motif).

In terms of processing, phosphorylated and activated by DcuS.

The protein localises to the cytoplasm. Member of the two-component regulatory system DcuR/DcuS. Involved in the C4-dicarboxylate-stimulated regulation of the genes encoding the anaerobic fumarate respiratory system (frdABCD; nuoAN; dcuB; dcuC; sdhCDAB; etc.). Weakly regulates the aerobic C4-dicarboxylate transporter dctA. This chain is Transcriptional regulatory protein DcuR (dcuR), found in Shigella flexneri.